The sequence spans 211 residues: Beta-crystallin B3 (211 aa).

A disordered region spans residues 1–21 (MTEQQSPPEQMVTGEGAGERG). Residues 1 to 23 (MTEQQSPPEQMVTGEGAGERGGN) are N-terminal arm. 2 consecutive Beta/gamma crystallin 'Greek key' domains span residues 24–63 (YKIT…QVES) and 64–108 (GPWL…RPLQ). A connecting peptide region spans residues 109–113 (IDSPD). Beta/gamma crystallin 'Greek key' domains follow at residues 114 to 155 (HKIH…RALN) and 156 to 198 (GTWV…RRVR). A C-terminal arm region spans residues 200–211 (QQWHQRGSFENS).

It belongs to the beta/gamma-crystallin family. As to quaternary structure, homo/heterodimer, or complexes of higher-order. The structure of beta-crystallin oligomers seems to be stabilized through interactions between the N-terminal arms.

Its function is as follows. Crystallins are the dominant structural components of the vertebrate eye lens. This Gallus gallus (Chicken) protein is Beta-crystallin B3 (CRYBB3).